Reading from the N-terminus, the 457-residue chain is UDP-glycosyltransferase 708C1 (457 aa).

Gly31 lines the UDP-alpha-D-glucose pocket. The Proton acceptor role is filled by His32. His32 serves as a coordination point for an anthocyanidin. UDP-alpha-D-glucose is bound at residue Thr34. Asn94 is a binding site for an anthocyanidin. Asp129 functions as the Charge relay in the catalytic mechanism. Thr150 serves as a coordination point for UDP-alpha-D-glucose. The tract at residues 279–280 is UDP; that stretch reads NR. Residues Val341, Gln343, His358, Trp361, Asn362, Ser363, and Glu366 each coordinate UDP-alpha-D-glucose. Residue Gly381 coordinates an anthocyanidin. Positions 382 and 383 each coordinate UDP-alpha-D-glucose.

It belongs to the UDP-glycosyltransferase family. Expressed in cotyledons. Not detected in flowers, leaves, roots and hypocotyls.

The catalysed reaction is a 3'-hydro-2'-hydroxy-beta-oxodihydrochalcone + UDP-alpha-D-glucose = a 3'-(beta-D-glucopyranosyl)-2'-hydroxy-beta-oxodihydrochalcone + UDP + H(+). Functionally, UDP-glucose-dependent glucosyltransferase catalyzing the C-glucosylation of 2-hydroxyflavanones (2-hydroxynaringenin, 2-hydroxyeriodictyol and 2-hydroxypinocembrin) and phloretin. No activity with flavanones, flavones or flavonols. Exhibits C-glycosylation activity toward 2',4',6'-trihydroxyacetophenone and phloretin using UDP-glucose as sugar donor. Can use UDP-galactose as sugar donor, but catalytic efficiency is 14-fold lower toward UDP-galactose than toward UDP-glucose. This chain is UDP-glycosyltransferase 708C1, found in Fagopyrum esculentum (Common buckwheat).